The following is a 430-amino-acid chain: MKDYLEIVDVVARQILDSRCFPTVEVEIYLEDGTIGRAAVPSGASTGMYEAVELRDGDKDKFLGKGVLNAIRNVNEIIAEELIGCNVFEQTYIDKMLIELDGTNNKSKLGANAILGVSLAVANAAANSLDMPLYRYIGGVNSKVLPVPMMNILNGGSHADNSVDLQEFMIMPAGAPTFSEALRMCAEVYHTLKKILNDKGYSTGIGDEGGFAPNLKSNQEALDVIIEAIGKAGYKAGEEIFIAIDAASSEYYKDGKYVLEHEGRTLTSAEMVDFFEDWVNKYPIISIEDGMAEEDWEGWKLITERLGKKVQLVGDDLFVTNTERLEKGIDLGVANSILIKLNQIGTLTETLNAIEMANRAGYTAVVSHRSGETEDTTIADLVVAVNAGQIKTGAPARSERVAKYNQLLRIEEELNDVAEYRGRKAFFNIK.

Gln-166 serves as a coordination point for (2R)-2-phosphoglycerate. The Proton donor role is filled by Glu-208. Asp-245, Glu-288, and Asp-315 together coordinate Mg(2+). Residues Lys-340, Arg-369, Ser-370, and Lys-391 each coordinate (2R)-2-phosphoglycerate. The active-site Proton acceptor is the Lys-340.

The protein belongs to the enolase family. It depends on Mg(2+) as a cofactor.

The protein resides in the cytoplasm. The protein localises to the secreted. It is found in the cell surface. It catalyses the reaction (2R)-2-phosphoglycerate = phosphoenolpyruvate + H2O. It participates in carbohydrate degradation; glycolysis; pyruvate from D-glyceraldehyde 3-phosphate: step 4/5. In terms of biological role, catalyzes the reversible conversion of 2-phosphoglycerate (2-PG) into phosphoenolpyruvate (PEP). It is essential for the degradation of carbohydrates via glycolysis. This chain is Enolase, found in Clostridium beijerinckii (strain ATCC 51743 / NCIMB 8052) (Clostridium acetobutylicum).